The chain runs to 436 residues: GTPase Der (436 aa).

EngA-type G domains are found at residues 4-165 and 172-347; these read NVIA…NFDS and FKLS…ENLE. GTP-binding positions include 10 to 17, 57 to 61, 119 to 122, 178 to 185, 225 to 229, and 290 to 293; these read GKPNVGKS, DTGGI, NKLD, GQPNSGKS, DTAGI, and NKWD. Positions 348–432 constitute a KH-like domain; it reads REIKPSVLTN…PINIIFKNKS (85 aa).

It belongs to the TRAFAC class TrmE-Era-EngA-EngB-Septin-like GTPase superfamily. EngA (Der) GTPase family. Associates with the 50S ribosomal subunit.

Its function is as follows. GTPase that plays an essential role in the late steps of ribosome biogenesis. The polypeptide is GTPase Der (Mycoplasmopsis agalactiae (strain NCTC 10123 / CIP 59.7 / PG2) (Mycoplasma agalactiae)).